The chain runs to 306 residues: Curved DNA-binding protein (306 aa).

The J domain occupies 5–69 (DYYAIMGVKP…QRRAEYDQMW (65 aa)).

The protein localises to the cytoplasm. It localises to the nucleoid. Functionally, DNA-binding protein that preferentially recognizes a curved DNA sequence. It is probably a functional analog of DnaJ; displays overlapping activities with DnaJ, but functions under different conditions, probably acting as a molecular chaperone in an adaptive response to environmental stresses other than heat shock. Lacks autonomous chaperone activity; binds native substrates and targets them for recognition by DnaK. Its activity is inhibited by the binding of CbpM. The chain is Curved DNA-binding protein from Escherichia coli O127:H6 (strain E2348/69 / EPEC).